The chain runs to 231 residues: 7-cyano-7-deazaguanine synthase (231 aa).

An ATP-binding site is contributed by 8–18; sequence FSGGQDSTTCL. Cysteine 188, cysteine 197, cysteine 200, and cysteine 203 together coordinate Zn(2+).

This sequence belongs to the QueC family. Zn(2+) is required as a cofactor.

The enzyme catalyses 7-carboxy-7-deazaguanine + NH4(+) + ATP = 7-cyano-7-deazaguanine + ADP + phosphate + H2O + H(+). Its pathway is purine metabolism; 7-cyano-7-deazaguanine biosynthesis. Catalyzes the ATP-dependent conversion of 7-carboxy-7-deazaguanine (CDG) to 7-cyano-7-deazaguanine (preQ(0)). This chain is 7-cyano-7-deazaguanine synthase, found in Escherichia coli O1:K1 / APEC.